The primary structure comprises 238 residues: Group 3 late-embryogenesis abundant protein, mitochondrial (238 aa).

Residues 41 to 62 (SSGSGRPADNWAESQKEKAKAG) form a disordered region. A coiled-coil region spans residues 50-202 (NWAESQKEKA…AGDLKDKAQQ (153 aa)). LEA 11-mer repeat repeat units lie at residues 64–74 (KDAQAEVGKVA), 89–99 (KDAVKQGANDL), 140–150 (KEAAENAWEKT), 151–161 (KDVAENLKDKV), 179–189 (KDRAQDAASEV), and 190–200 (KHKAGDLKDKA). Basic and acidic residues-rich tracts occupy residues 182–200 (AQDA…KDKA) and 213–225 (DNRK…RRDS). Residues 182–238 (AQDAASEVKHKAGDLKDKAQQVIHDATTQSGDNRKQDQQQRRDSQGSQSGQNSRSRN) are disordered. The span at 226–238 (QGSQSGQNSRSRN) shows a compositional bias: low complexity.

This sequence belongs to the LEA type 4 family.

Its subcellular location is the mitochondrion. Mitochondrial heat soluble protein acting as a molecular shield in water-deficient condition. The chain is Group 3 late-embryogenesis abundant protein, mitochondrial from Hypsibius exemplaris (Freshwater tardigrade).